The following is a 119-amino-acid chain: MEAKAIARHVRVTPRKARRMVDLIRGKKATEAITILKFAPQDASLPVRKVLESAIANARVKADKAGEPFRENDLVVKETYVDEGVTLKRFRARAQGRAARINKRTSHITVVVANKEGNR.

Belongs to the universal ribosomal protein uL22 family. In terms of assembly, part of the 50S ribosomal subunit.

Functionally, this protein binds specifically to 23S rRNA; its binding is stimulated by other ribosomal proteins, e.g. L4, L17, and L20. It is important during the early stages of 50S assembly. It makes multiple contacts with different domains of the 23S rRNA in the assembled 50S subunit and ribosome. In terms of biological role, the globular domain of the protein is located near the polypeptide exit tunnel on the outside of the subunit, while an extended beta-hairpin is found that lines the wall of the exit tunnel in the center of the 70S ribosome. This Bifidobacterium adolescentis (strain ATCC 15703 / DSM 20083 / NCTC 11814 / E194a) protein is Large ribosomal subunit protein uL22.